Reading from the N-terminus, the 129-residue chain is Ribosome-binding factor A (129 aa).

It belongs to the RbfA family. Monomer. Binds 30S ribosomal subunits, but not 50S ribosomal subunits or 70S ribosomes.

It is found in the cytoplasm. One of several proteins that assist in the late maturation steps of the functional core of the 30S ribosomal subunit. Associates with free 30S ribosomal subunits (but not with 30S subunits that are part of 70S ribosomes or polysomes). Required for efficient processing of 16S rRNA. May interact with the 5'-terminal helix region of 16S rRNA. This chain is Ribosome-binding factor A, found in Gloeobacter violaceus (strain ATCC 29082 / PCC 7421).